The following is a 349-amino-acid chain: MADTDDEHASPQNPDNRIELERQAADEAHKAKILAHPPEGPGGDPLHPPVTPRPGATRVVRDRKGGRRVVEVPSTGHSWDGIEEYDNPLPRWWLWTFYATIVWGVLYLIAYPAIPLVNGATQGLLGQNYRSDVAAEIQRFNEANAPIQAKLVETPLEEIAADPELANYTANAGAAIFRTWCAQCHGSGAGGATGYPSLLDNDWLWGGTLEEIHTTVMHGIRDPKDADTRYSEMPRFGIDGLLENAQISQVVNHVLELGGLPHDAALAAEGVEVFADNCSSCHAEDGTGDRAQGAPDLTDAVWLYGSDPATITRIVRDGPFGVMPAWTGRLSEADIVAVAAYVHSLGGGE.

The disordered stretch occupies residues 1-67 (MADTDDEHAS…RVVRDRKGGR (67 aa)). Over 1 to 96 (MADTDDEHAS…NPLPRWWLWT (96 aa)) the chain is Cytoplasmic. Residues 16 to 30 (NRIELERQAADEAHK) show a composition bias toward basic and acidic residues. Residues 97–117 (FYATIVWGVLYLIAYPAIPLV) form a helical membrane-spanning segment. Over 118–349 (NGATQGLLGQ…AYVHSLGGGE (232 aa)) the chain is Periplasmic. Cytochrome c domains lie at 168 to 258 (YTAN…LELG) and 265 to 346 (ALAA…HSLG). Residues Cys-181, Cys-184, His-185, Met-233, Cys-278, Cys-281, His-282, and Met-323 each contribute to the heme c site.

This sequence belongs to the CcoP / FixP family. As to quaternary structure, component of the cbb3-type cytochrome c oxidase at least composed of CcoN, CcoO, CcoQ and CcoP. Heme c is required as a cofactor.

The protein localises to the cell inner membrane. It participates in energy metabolism; oxidative phosphorylation. Functionally, C-type cytochrome. Part of the cbb3-type cytochrome c oxidase complex. CcoP subunit is required for transferring electrons from donor cytochrome c via its heme groups to CcoO subunit. From there, electrons are shuttled to the catalytic binuclear center of CcoN subunit where oxygen reduction takes place. The complex also functions as a proton pump. The chain is Cbb3-type cytochrome c oxidase subunit CcoP from Paracoccus denitrificans (strain Pd 1222).